Reading from the N-terminus, the 467-residue chain is Argininosuccinate lyase 1 (467 aa).

Belongs to the lyase 1 family. Argininosuccinate lyase subfamily.

The protein resides in the cytoplasm. It catalyses the reaction 2-(N(omega)-L-arginino)succinate = fumarate + L-arginine. Its pathway is amino-acid biosynthesis; L-arginine biosynthesis; L-arginine from L-ornithine and carbamoyl phosphate: step 3/3. The polypeptide is Argininosuccinate lyase 1 (Rhizobium meliloti (strain 1021) (Ensifer meliloti)).